Reading from the N-terminus, the 364-residue chain is Aminomethyltransferase (364 aa).

This sequence belongs to the GcvT family. As to quaternary structure, the glycine cleavage system is composed of four proteins: P, T, L and H.

It carries out the reaction N(6)-[(R)-S(8)-aminomethyldihydrolipoyl]-L-lysyl-[protein] + (6S)-5,6,7,8-tetrahydrofolate = N(6)-[(R)-dihydrolipoyl]-L-lysyl-[protein] + (6R)-5,10-methylene-5,6,7,8-tetrahydrofolate + NH4(+). In terms of biological role, the glycine cleavage system catalyzes the degradation of glycine. This Escherichia coli O6:H1 (strain CFT073 / ATCC 700928 / UPEC) protein is Aminomethyltransferase.